The primary structure comprises 528 residues: Abrin-d (528 aa).

Q1 carries the pyrrolidone carboxylic acid modification. Residue E164 is part of the active site. N200 is a glycosylation site (N-linked (GlcNAc...) asparagine). 3 disulfides stabilise this stretch: C247/C269, C286/C305, and C329/C346. Residues 273–400 (YEPTVRIGGR…YLMRQGWRTG (128 aa)) enclose the Ricin B-type lectin 1 domain. Residues 283-325 (DGMCVDVYDDGYHNGNRIIAWKCKDRLEENQLWTLKSDLTIRS) form a 1-alpha repeat. One copy of the 1-beta repeat lies at 326 to 366 (NGKCLTTEGYAPGNYVMIYDCTSAVAEATYWEIWDNGTIIN). N-linked (GlcNAc...) asparagine glycans are attached at residues N361 and N401. The 1-gamma repeat unit spans residues 369-401 (SALVLSAESSSMGGTLTVQTNEYLMRQGWRTGN). Positions 403–527 (TSPFVTSISG…GKPNQIWLTL (125 aa)) constitute a Ricin B-type lectin 2 domain. Residues 414-449 (SDLCMQAQGSNVWLADCDNNKKEQQWALYTDGSIRS) form a 2-alpha repeat. Disulfide bonds link C417-C430 and C456-C473. Residues 453–492 (TNNCLTSKDHKQGSPIVLMACSNGWASQRWLFKNDGSIYS) form a 2-beta repeat. A 2-gamma repeat occupies 495–528 (DDMVMDVKGSDPSLKQIILWPYTGKPNQIWLTLF).

In the N-terminal section; belongs to the ribosome-inactivating protein family. Type 2 RIP subfamily. In terms of assembly, disulfide-linked dimer of A and B chains.

The catalysed reaction is Endohydrolysis of the N-glycosidic bond at one specific adenosine on the 28S rRNA.. In terms of biological role, the A chain is responsible for inhibiting protein synthesis through the catalytic inactivation of 60S ribosomal subunits by removing adenine from position 4,324 of 28S rRNA. The B chain is a galactose-specific lectin that facilitates the binding of abrin to the cell membrane that precedes endocytosis. This Abrus precatorius (Indian licorice) protein is Abrin-d.